Here is a 260-residue protein sequence, read N- to C-terminus: MSFTVLIPARLASSRLPNKPLADINGVPMVVRVAQRALQSSALRTVVAADGTEIIEKCAAFGIQTVLTRVDHPSGSDRLAEACGLLGLLDDDIVVNVQGDEPLINPALIDAVARQLEARPDCAMSTAAHSIDELADFLNPNVVKVVLDARQTALYFSRAPIPAARDLAGQAWWKHGNLPKPLRHVGIYAYRVGFLRQFPQLPQAPLEQLESLEQLRALWHGYRIAVHITEHAPGPGVDTPEDLERVRRLVANDAHLADPV.

Belongs to the KdsB family.

Its subcellular location is the cytoplasm. The enzyme catalyses 3-deoxy-alpha-D-manno-oct-2-ulosonate + CTP = CMP-3-deoxy-beta-D-manno-octulosonate + diphosphate. It participates in nucleotide-sugar biosynthesis; CMP-3-deoxy-D-manno-octulosonate biosynthesis; CMP-3-deoxy-D-manno-octulosonate from 3-deoxy-D-manno-octulosonate and CTP: step 1/1. The protein operates within bacterial outer membrane biogenesis; lipopolysaccharide biosynthesis. Functionally, activates KDO (a required 8-carbon sugar) for incorporation into bacterial lipopolysaccharide in Gram-negative bacteria. The protein is 3-deoxy-manno-octulosonate cytidylyltransferase of Polaromonas naphthalenivorans (strain CJ2).